Reading from the N-terminus, the 67-residue chain is uncharacterized protein (67 aa).

A helical membrane pass occupies residues 12-34; the sequence is YYYAHQTVCITSTGFALCFVVQA.

Its subcellular location is the membrane. This is an uncharacterized protein from Saccharomyces cerevisiae (strain ATCC 204508 / S288c) (Baker's yeast).